The sequence spans 158 residues: Crossover junction endodeoxyribonuclease RuvC (158 aa).

Residues Asp7, Glu67, and Asp140 contribute to the active site. Residues Asp7, Glu67, and Asp140 each coordinate Mg(2+).

The protein belongs to the RuvC family. As to quaternary structure, homodimer which binds Holliday junction (HJ) DNA. The HJ becomes 2-fold symmetrical on binding to RuvC with unstacked arms; it has a different conformation from HJ DNA in complex with RuvA. In the full resolvosome a probable DNA-RuvA(4)-RuvB(12)-RuvC(2) complex forms which resolves the HJ. The cofactor is Mg(2+).

It localises to the cytoplasm. It catalyses the reaction Endonucleolytic cleavage at a junction such as a reciprocal single-stranded crossover between two homologous DNA duplexes (Holliday junction).. Its function is as follows. The RuvA-RuvB-RuvC complex processes Holliday junction (HJ) DNA during genetic recombination and DNA repair. Endonuclease that resolves HJ intermediates. Cleaves cruciform DNA by making single-stranded nicks across the HJ at symmetrical positions within the homologous arms, yielding a 5'-phosphate and a 3'-hydroxyl group; requires a central core of homology in the junction. The consensus cleavage sequence is 5'-(A/T)TT(C/G)-3'. Cleavage occurs on the 3'-side of the TT dinucleotide at the point of strand exchange. HJ branch migration catalyzed by RuvA-RuvB allows RuvC to scan DNA until it finds its consensus sequence, where it cleaves and resolves the cruciform DNA. This chain is Crossover junction endodeoxyribonuclease RuvC, found in Dictyoglomus turgidum (strain DSM 6724 / Z-1310).